The primary structure comprises 499 residues: Pyruvate kinase (499 aa).

Arginine 50 contacts substrate. 4 residues coordinate K(+): asparagine 52, serine 54, aspartate 84, and threonine 85. 52 to 55 (NFSH) is an ATP binding site. Arginine 91 serves as a coordination point for ATP. Glutamate 241 is a Mg(2+) binding site. Substrate-binding residues include glycine 264, aspartate 265, and threonine 297. Aspartate 265 contacts Mg(2+).

This sequence belongs to the pyruvate kinase family. In terms of assembly, homotetramer. Requires Mg(2+) as cofactor. The cofactor is K(+).

The catalysed reaction is pyruvate + ATP = phosphoenolpyruvate + ADP + H(+). Its pathway is carbohydrate degradation; glycolysis; pyruvate from D-glyceraldehyde 3-phosphate: step 5/5. Its activity is regulated as follows. Activated by fructose 2,6-bisphosphate, activated by the effector in a non cooperative manner. This Leishmania mexicana protein is Pyruvate kinase (PYK).